A 428-amino-acid chain; its full sequence is Gamma-glutamyl phosphate reductase (428 aa).

It belongs to the gamma-glutamyl phosphate reductase family.

The protein localises to the cytoplasm. The catalysed reaction is L-glutamate 5-semialdehyde + phosphate + NADP(+) = L-glutamyl 5-phosphate + NADPH + H(+). The protein operates within amino-acid biosynthesis; L-proline biosynthesis; L-glutamate 5-semialdehyde from L-glutamate: step 2/2. In terms of biological role, catalyzes the NADPH-dependent reduction of L-glutamate 5-phosphate into L-glutamate 5-semialdehyde and phosphate. The product spontaneously undergoes cyclization to form 1-pyrroline-5-carboxylate. The polypeptide is Gamma-glutamyl phosphate reductase (Clostridium tetani (strain Massachusetts / E88)).